The following is a 417-amino-acid chain: Serine hydroxymethyltransferase (417 aa).

The residue at position 54 (lysine 54) is an N6-acetyllysine. (6S)-5,6,7,8-tetrahydrofolate contacts are provided by residues leucine 121 and 125–127 (GHL). Lysine 229 carries the post-translational modification N6-(pyridoxal phosphate)lysine. N6-acetyllysine occurs at positions 250, 285, and 354. 355–357 (SPF) provides a ligand contact to (6S)-5,6,7,8-tetrahydrofolate. Position 375 is an N6-acetyllysine (lysine 375).

The protein belongs to the SHMT family. As to quaternary structure, homodimer. The cofactor is pyridoxal 5'-phosphate.

The protein localises to the cytoplasm. The catalysed reaction is (6R)-5,10-methylene-5,6,7,8-tetrahydrofolate + glycine + H2O = (6S)-5,6,7,8-tetrahydrofolate + L-serine. Its pathway is one-carbon metabolism; tetrahydrofolate interconversion. It participates in amino-acid biosynthesis; glycine biosynthesis; glycine from L-serine: step 1/1. Functionally, catalyzes the reversible interconversion of serine and glycine with tetrahydrofolate (THF) serving as the one-carbon carrier. This reaction serves as the major source of one-carbon groups required for the biosynthesis of purines, thymidylate, methionine, and other important biomolecules. Also exhibits THF-independent aldolase activity toward beta-hydroxyamino acids, producing glycine and aldehydes, via a retro-aldol mechanism. In Escherichia coli O157:H7, this protein is Serine hydroxymethyltransferase.